A 1099-amino-acid chain; its full sequence is Carbamoyl phosphate synthase large chain (1099 aa).

Positions 1–402 are carboxyphosphate synthetic domain; that stretch reads MPKRTDLKSV…ALQKALRSLE (402 aa). 12 residues coordinate ATP: Arg-129, Arg-169, Gly-175, Gly-176, Glu-208, Ile-210, Glu-215, Gly-241, Val-242, His-243, Gln-285, and Glu-299. The region spanning 133 to 328 is the ATP-grasp 1 domain; the sequence is KGVVERCGAE…IAKIATKLSL (196 aa). Positions 285, 299, and 301 each coordinate Mg(2+). The Mn(2+) site is built by Gln-285, Glu-299, and Asn-301. Residues 403-546 are oligomerization domain; that stretch reads QKGSQLDFSH…YHYSSYDEED (144 aa). The carbamoyl phosphate synthetic domain stretch occupies residues 547–950; sequence EVALHSKPSI…AFAKSQAAAN (404 aa). An ATP-grasp 2 domain is found at 677 to 868; the sequence is SRVLDEAGLI…MAKAAALIGT (192 aa). ATP contacts are provided by Arg-713, Arg-752, Leu-754, Glu-759, Gly-784, Ile-785, His-786, Ser-787, Gln-827, and Glu-839. Mg(2+) is bound by residues Gln-827, Glu-839, and Asn-841. Residues Gln-827, Glu-839, and Asn-841 each coordinate Mn(2+). The region spanning 951 to 1099 is the MGS-like domain; the sequence is NALPTEGKIF…AENLKALQNG (149 aa). The tract at residues 951-1099 is allosteric domain; sequence NALPTEGKIF…AENLKALQNG (149 aa).

Belongs to the CarB family. As to quaternary structure, composed of two chains; the small (or glutamine) chain promotes the hydrolysis of glutamine to ammonia, which is used by the large (or ammonia) chain to synthesize carbamoyl phosphate. Tetramer of heterodimers (alpha,beta)4. Requires Mg(2+) as cofactor. The cofactor is Mn(2+).

The catalysed reaction is hydrogencarbonate + L-glutamine + 2 ATP + H2O = carbamoyl phosphate + L-glutamate + 2 ADP + phosphate + 2 H(+). It carries out the reaction hydrogencarbonate + NH4(+) + 2 ATP = carbamoyl phosphate + 2 ADP + phosphate + 2 H(+). The protein operates within amino-acid biosynthesis; L-arginine biosynthesis; carbamoyl phosphate from bicarbonate: step 1/1. It functions in the pathway pyrimidine metabolism; UMP biosynthesis via de novo pathway; (S)-dihydroorotate from bicarbonate: step 1/3. In terms of biological role, large subunit of the glutamine-dependent carbamoyl phosphate synthetase (CPSase). CPSase catalyzes the formation of carbamoyl phosphate from the ammonia moiety of glutamine, carbonate, and phosphate donated by ATP, constituting the first step of 2 biosynthetic pathways, one leading to arginine and/or urea and the other to pyrimidine nucleotides. The large subunit (synthetase) binds the substrates ammonia (free or transferred from glutamine from the small subunit), hydrogencarbonate and ATP and carries out an ATP-coupled ligase reaction, activating hydrogencarbonate by forming carboxy phosphate which reacts with ammonia to form carbamoyl phosphate. This chain is Carbamoyl phosphate synthase large chain, found in Arthrobacter sp. (strain FB24).